The following is a 286-amino-acid chain: Puff II/9-2 protein (286 aa).

The signal sequence occupies residues 1 to 19 (MKQFIVLTVVLLAIQELQG). Positions 61 to 235 (IDGLKKENNI…EKDLNTLRCE (175 aa)) are helical. Asparagine 156 carries an N-linked (GlcNAc...) asparagine glycan.

In Bradysia coprophila (Dark-winged fungus gnat), this protein is Puff II/9-2 protein (II/9-2).